Consider the following 242-residue polypeptide: ATP-dependent dethiobiotin synthetase BioD (242 aa).

An ATP-binding site is contributed by 12 to 17 (EVGKTV). Thr16 contributes to the Mg(2+) binding site. The active site involves Lys37. Ser41 contributes to the substrate binding site. ATP is bound by residues Asp51 and 112 to 115 (EGAG). Positions 51 and 112 each coordinate Mg(2+).

The protein belongs to the dethiobiotin synthetase family. In terms of assembly, homodimer. The cofactor is Mg(2+).

Its subcellular location is the cytoplasm. It carries out the reaction (7R,8S)-7,8-diammoniononanoate + CO2 + ATP = (4R,5S)-dethiobiotin + ADP + phosphate + 3 H(+). It functions in the pathway cofactor biosynthesis; biotin biosynthesis; biotin from 7,8-diaminononanoate: step 1/2. Functionally, catalyzes a mechanistically unusual reaction, the ATP-dependent insertion of CO2 between the N7 and N8 nitrogen atoms of 7,8-diaminopelargonic acid (DAPA, also called 7,8-diammoniononanoate) to form a ureido ring. The protein is ATP-dependent dethiobiotin synthetase BioD of Bacillus thuringiensis (strain Al Hakam).